A 106-amino-acid polypeptide reads, in one-letter code: Small cardioactive peptide-related peptide (106 aa).

The first 20 residues, 1–20 (MFCKHLSFVAITICFLLVLA), serve as a signal peptide directing secretion. The propeptide at 21 to 41 (KTENEIQQKNIKFDQRTWRNM) is amino-terminal spacer peptide. Glutamine amide is present on Gln-52. Positions 55–106 (SDNQPDYTCCGMPLTKYVGICPIGMECCPGLKKVLQKSGQRTIYSVCVADAY) are cleaved as a propeptide — carboxy-terminal spacer peptide.

In terms of tissue distribution, expression is seen in the peripheral and central nervous systems in tissues such as the brain, the inferior buccal ganglion, the gastric ganglion, the olfactory lobe, the peduncle lobe and the optic lobe. Expression in the brain is distributed in the median inferior frontal lobe, the superior buccal lobe, the prebranchial lobe and the pedal lobe. Not expressed in the vasomotor lobe or the palliovisceral lobe that controls the cardiac system.

Its subcellular location is the secreted. Functionally, evokes contractions in the radula protractor muscle, and may regulate feeding behavior and gut motility by controlling muscle contraction of the buccal mass. This chain is Small cardioactive peptide-related peptide, found in Octopus vulgaris (Common octopus).